The following is a 546-amino-acid chain: Membrane protein insertase YidC (546 aa).

A helical transmembrane segment spans residues 6 to 26; sequence LILFIVFSFSLLLLWEAWQDK. Residues 31 to 56 form a disordered region; the sequence is PATRPVAGAPAGSAAPTPSTALNAPA. Positions 37 to 56 are enriched in low complexity; the sequence is AGAPAGSAAPTPSTALNAPA. 4 consecutive transmembrane segments (helical) span residues 351 to 371, 425 to 445, 465 to 482, and 494 to 514; these read LVGNWGWAIIILTILIKLALY, LPILIQIPVFIALYWVLLAAV, WYILPIIMGVTSILQVKL, and IMMIMPVAFTVMFVFFPAGLV.

Belongs to the OXA1/ALB3/YidC family. Type 1 subfamily. As to quaternary structure, interacts with the Sec translocase complex via SecD. Specifically interacts with transmembrane segments of nascent integral membrane proteins during membrane integration.

It is found in the cell inner membrane. In terms of biological role, required for the insertion and/or proper folding and/or complex formation of integral membrane proteins into the membrane. Involved in integration of membrane proteins that insert both dependently and independently of the Sec translocase complex, as well as at least some lipoproteins. Aids folding of multispanning membrane proteins. This is Membrane protein insertase YidC from Thiobacillus denitrificans (strain ATCC 25259 / T1).